The sequence spans 30 residues: KIPCGESCVYIPCISSVLGCSCSNKVCYKD.

A cross-link (cyclopeptide (Lys-Asp)) is located at residues 1-30; the sequence is KIPCGESCVYIPCISSVLGCSCSNKVCYKD. Disulfide bonds link Cys4–Cys20, Cys8–Cys22, and Cys13–Cys27.

In terms of processing, this is a cyclic peptide. Detected in stems (at protein level).

In terms of biological role, probably participates in a plant defense mechanism. In Pigea enneasperma (Spade flower), this protein is Cyclotide hyen-H.